Consider the following 131-residue polypeptide: Histone H2B.1 (131 aa).

The span at 1–20 shows a compositional bias: basic and acidic residues; the sequence is MAPPKAEKKPASKAPAEKKP. The segment at 1-39 is disordered; it reads MAPPKAEKKPASKAPAEKKPAAKKTASATDSKKRTKTRK. Residues lysine 8 and lysine 9 each carry the N6-acetyllysine; alternate modification. Glycyl lysine isopeptide (Lys-Gly) (interchain with G-Cter in SUMO); alternate cross-links involve residues lysine 8 and lysine 9. Serine 12 bears the Phosphoserine mark. Lysine 13 is modified (N6-acetyllysine). Residue lysine 18 is modified to N6-acetyllysine; alternate. Residue lysine 18 forms a Glycyl lysine isopeptide (Lys-Gly) (interchain with G-Cter in SUMO); alternate linkage. Residue lysine 19 forms a Glycyl lysine isopeptide (Lys-Gly) (interchain with G-Cter in SUMO) linkage. Residue lysine 125 forms a Glycyl lysine isopeptide (Lys-Gly) (interchain with G-Cter in ubiquitin) linkage.

This sequence belongs to the histone H2B family. In terms of assembly, the nucleosome is a histone octamer containing two molecules each of H2A, H2B, H3 and H4 assembled in one H3-H4 heterotetramer and two H2A-H2B heterodimers. The octamer wraps approximately 147 bp of DNA. In terms of processing, monoubiquitinated to form H2BK123ub1. H2BK123ub1 gives a specific tag for epigenetic transcriptional activation and is also prerequisite for H3K4me and H3K79me formation. H2BK123ub1 also modulates the formation of double-strand breaks during meiosis and is a prerequisite for DNA-damage checkpoint activation. Phosphorylated by STE20 to form H2BS10ph during progression through meiotic prophase. May be correlated with chromosome condensation. Post-translationally, acetylated by GCN5 to form H2BK11ac and H2BK16ac. H2BK16ac can also be formed by ESA1. Acetylation of N-terminal lysines and particularly formation of H2BK11acK16ac has a positive effect on transcription. In terms of processing, sumoylation to form H2BK6su or H2BK7su, and probably also H2BK16su or H2BK17su, occurs preferentially near the telomeres and represses gene transcription.

The protein resides in the nucleus. Its subcellular location is the chromosome. Functionally, core component of nucleosome. Nucleosomes wrap and compact DNA into chromatin, limiting DNA accessibility to the cellular machineries which require DNA as a template. Histones thereby play a central role in transcription regulation, DNA repair, DNA replication and chromosomal stability. DNA accessibility is regulated via a complex set of post-translational modifications of histones, also called histone code, and nucleosome remodeling. The chain is Histone H2B.1 (HTB1) from Scheffersomyces stipitis (strain ATCC 58785 / CBS 6054 / NBRC 10063 / NRRL Y-11545) (Yeast).